The chain runs to 129 residues: D-ribose pyranase (129 aa).

The active-site Proton donor is the His20. Residues Asp28, His96, and 118-120 each bind substrate; that span reads YAN.

The protein belongs to the RbsD / FucU family. RbsD subfamily. As to quaternary structure, homodecamer.

It is found in the cytoplasm. It catalyses the reaction beta-D-ribopyranose = beta-D-ribofuranose. It participates in carbohydrate metabolism; D-ribose degradation; D-ribose 5-phosphate from beta-D-ribopyranose: step 1/2. Catalyzes the interconversion of beta-pyran and beta-furan forms of D-ribose. The sequence is that of D-ribose pyranase from Streptomyces coelicolor (strain ATCC BAA-471 / A3(2) / M145).